A 285-amino-acid chain; its full sequence is Acetyl-coenzyme A carboxylase carboxyl transferase subunit beta (285 aa).

In terms of domain architecture, CoA carboxyltransferase N-terminal spans 22-285; it reads LWTKCEACGA…HPGVAYAPGV (264 aa). 4 residues coordinate Zn(2+): cysteine 26, cysteine 29, cysteine 45, and cysteine 48. Residues 26–48 form a C4-type zinc finger; it reads CEACGAQIYKKEFQENLHVCPKC.

This sequence belongs to the AccD/PCCB family. As to quaternary structure, acetyl-CoA carboxylase is a heterohexamer composed of biotin carboxyl carrier protein (AccB), biotin carboxylase (AccC) and two subunits each of ACCase subunit alpha (AccA) and ACCase subunit beta (AccD). It depends on Zn(2+) as a cofactor.

Its subcellular location is the cytoplasm. The catalysed reaction is N(6)-carboxybiotinyl-L-lysyl-[protein] + acetyl-CoA = N(6)-biotinyl-L-lysyl-[protein] + malonyl-CoA. It functions in the pathway lipid metabolism; malonyl-CoA biosynthesis; malonyl-CoA from acetyl-CoA: step 1/1. In terms of biological role, component of the acetyl coenzyme A carboxylase (ACC) complex. Biotin carboxylase (BC) catalyzes the carboxylation of biotin on its carrier protein (BCCP) and then the CO(2) group is transferred by the transcarboxylase to acetyl-CoA to form malonyl-CoA. In Thermus thermophilus (strain ATCC 27634 / DSM 579 / HB8), this protein is Acetyl-coenzyme A carboxylase carboxyl transferase subunit beta.